Consider the following 152-residue polypeptide: Large ribosomal subunit protein uL30 (152 aa).

Belongs to the universal ribosomal protein uL30 family. Part of the 50S ribosomal subunit.

In Methanobrevibacter smithii (strain ATCC 35061 / DSM 861 / OCM 144 / PS), this protein is Large ribosomal subunit protein uL30.